Consider the following 2442-residue polypeptide: Piezo-type mechanosensitive ion channel component 1 (2442 aa).

At 1 to 5 (MTVPP) the chain is on the extracellular side. A helical transmembrane segment spans residues 6–26 (LLKSCVVKLLLPAALLAAAII). Residue R27 is a topological domain, cytoplasmic. The chain crosses the membrane as a helical span at residues 28–48 (PSFLSIGYVLLALVSAVLPPI). Residues 49 to 56 (RKSLALPK) are Extracellular-facing. Residues 57–77 (LVGTFVIITFLFCLAVALGVG) traverse the membrane as a helical segment. Over 78 to 122 (SYQISEQVVHKNDRTYICNRSDTTLFRSIGLVRFHPTGTFESTRA) the chain is Cytoplasmic. The chain crosses the membrane as a helical span at residues 123 to 143 (FLPEIIATSAALLTIIIVMFL). Over 144-173 (SHRDEQLDVVGDVVTVRSESGREQRRQRKL) the chain is Extracellular. Residues 174–196 (AAIMWSAIGNSLRRLTNFVLFLF) traverse the membrane as a helical segment. The Cytoplasmic segment spans residues 197–198 (TA). A helical membrane pass occupies residues 199–219 (YVGIVKPSLSNSIYFLAFLFI). The Extracellular segment spans residues 220-239 (STWWSTYTPLRHGVYNQIKK). A helical membrane pass occupies residues 240-260 (FLIFYSALHFLVLYTYQIPIV). The Cytoplasmic segment spans residues 261–303 (HHSWLPTGSFLPRLFGLTVLMDSSCPEWWKFPFVAPDFNDDDL). A helical membrane pass occupies residues 304–324 (IMKWPLYANPIVVLVFFYLTV). Residues 325–454 (AQYKFTRNGS…GDKESAASKG (130 aa)) lie on the Extracellular side of the membrane. Residues N332, N392, and N440 are each glycosylated (N-linked (GlcNAc...) asparagine). The disordered stretch occupies residues 389 to 417 (LLSNASSSANDDEQGRARSRSPLRNGEEQ). Residues 455 to 475 (MIAVMTFVIFHSYSIALTAMM) form a helical membrane-spanning segment. The Cytoplasmic segment spans residues 476–478 (TWA). The chain crosses the membrane as a helical span at residues 479–499 (LLYHSIFGLILLILTCILWIF). At 500–506 (RDTRKSS) the chain is on the extracellular side. Residues 507-527 (FAMAPIILMYIEFLLILQYFL) form a helical membrane-spanning segment. Over 528-552 (SMDIHAEIGDPAWMNFVGIEWTTLP) the chain is Cytoplasmic. The chain crosses the membrane as a helical span at residues 553 to 573 (VHAVIILCVQTLLTLPVFLLL). Over 574–633 (RLARREKFYESLSDYERQRRINSYGTFGASKTGAGGVAVAKFQDPKSRKFAAFVEYLSNK) the chain is Extracellular. Residues 634 to 654 (VSVYFIFVVSVVLLVVSTCFA) form a helical membrane-spanning segment. Topologically, residues 655–656 (PN) are cytoplasmic. Residues 657-677 (FYNILFFALWALNLIYLKFSF) traverse the membrane as a helical segment. The Extracellular portion of the chain corresponds to 678–683 (RLYRGL). A helical membrane pass occupies residues 684-704 (AYAFWLTLTFYTSIVIIALYI). The Cytoplasmic portion of the chain corresponds to 705–739 (YQFPGVSQWIIRNTSLSQEWLNAIGLVDFRAIGES). A helical membrane pass occupies residues 740–760 (GALFLQLLAPIALFVVTMLQL). Residues 761-832 (KFFHGPWSRA…WRFFEVHISK (72 aa)) lie on the Extracellular side of the membrane. The tract at residues 768–798 (SRATSPRRAENDPPTSTTEAAAVASTSGTQG) is disordered. Positions 782 to 794 (TSTTEAAAVASTS) are enriched in low complexity. A glycan (N-linked (GlcNAc...) asparagine) is linked at N816. A helical transmembrane segment spans residues 833-853 (IVFVIIAIFIANNINALYIPL). The Cytoplasmic segment spans residues 854–874 (VILLSLAICLPSAADGIFSLF). The helical transmembrane segment at 875–895 (MCAYLFLVALSKMIYQLDIVP) threads the bilayer. Residues 896-931 (ELSQIDRGVGADNCSHGNISMPEWFGLKKEVEGTEP) are Extracellular-facing. N-linked (GlcNAc...) asparagine glycosylation is found at N908 and N913. The helical transmembrane segment at 932–952 (IYMLFGVIVSIIALAFQSIVI) threads the bilayer. Over 953–990 (YRQRHYRASLGLPESMRAKVFPDFHHSHFDRSLKNAIQ) the chain is Cytoplasmic. The helical transmembrane segment at 991 to 1011 (FLIDYGFYKFGLEITMIAIGI) threads the bilayer. D1012 is a topological domain (extracellular). The helical transmembrane segment at 1013 to 1033 (IFNRMDALAAIQCFWLVLFAL) threads the bilayer. Topologically, residues 1034 to 1041 (NKRVFVRR) are cytoplasmic. Residues 1042 to 1062 (IWVFYVIYMAILYPLQFFSYV) form a helical membrane-spanning segment. Over 1063–1096 (GLPPDSCIEYPWSYWIPSYSDDARFNLSYLLNLS) the chain is Extracellular. Residues N1088 and N1094 are each glycosylated (N-linked (GlcNAc...) asparagine). A helical membrane pass occupies residues 1097–1117 (IYGVNWPSAYLIGDFFVLLLA). The Cytoplasmic portion of the chain corresponds to 1118 to 1160 (SCQLAVFRREGEDNDSIYNDGNFVIKPENPQYDFIDTKKSYVD). The chain crosses the membrane as a helical span at residues 1161–1181 (YFKSFVFHYGHWITLMSTLAA). The Extracellular portion of the chain corresponds to 1182–1187 (GIAGTS). Residues 1188 to 1210 (LFALGYIIFTLTMLWSGNNLYVM) form a helical membrane-spanning segment. The Cytoplasmic portion of the chain corresponds to 1211-1231 (NSTLRSFEHTLKRWNALLGYT). The chain crosses the membrane as a helical span at residues 1232–1252 (LFTITMKVCLQIFGCVFLSWF). At 1253 to 1299 (DQSGGWGKTLCIVRQLFSITCVNNECHVLKELEDFSKACAVETKEGN) the chain is on the extracellular side. Residues 1300-1320 (IGFDVIALSFLVFQIRIFHSW) traverse the membrane as a helical segment. Residues 1321–1615 (YFQHCMVEYR…VVNCIGAHTD (295 aa)) lie on the Cytoplasmic side of the membrane. Residues 1463-1502 (DTIKDPDSRALIAVSEPEARKPGGTEETDGDEDEDNKDSK) form a disordered region. Acidic residues predominate over residues 1488–1498 (EETDGDEDEDN). Residues 1616-1636 (ILCYFFAIMTQVMTGGLITLP) form a helical membrane-spanning segment. At 1637–1654 (LPLMSLFWGNLSNPRPSK) the chain is on the extracellular side. Residue N1646 is glycosylated (N-linked (GlcNAc...) asparagine). Residues 1655–1675 (FFWVTMITYTECVIVIKFVCQ) traverse the membrane as a helical segment. The Cytoplasmic segment spans residues 1676–1706 (FAFMPYNSITWRTEHQMDPMSLDKLFGVSQR). Residues 1707–1727 (DSFALWDIVLLFSLFFHRYML) traverse the membrane as a helical segment. The Extracellular segment spans residues 1728-1833 (RKLGLWKDAN…KFRYIRDLYP (106 aa)). Residue N1737 is glycosylated (N-linked (GlcNAc...) asparagine). A helical transmembrane segment spans residues 1834 to 1854 (IMFGIDVICFLIMTFGYSAFG). The Cytoplasmic segment spans residues 1855–1866 (EGGSGNVLDDVK). A helical membrane pass occupies residues 1867–1887 (ASRIPVTLVVMLVGMTLAIII). The Extracellular segment spans residues 1888-1900 (DRALYLRKSVVGK). A helical membrane pass occupies residues 1901 to 1921 (LIYQVLMIAFLHIWVFLVLPN). Topologically, residues 1922 to 1930 (MTRRSAISN) are cytoplasmic. Residues 1931–1951 (HVAQALYVIKSCYFLVSAWQI) form a helical membrane-spanning segment. The Extracellular portion of the chain corresponds to 1952–2046 (RNGYPELCIG…KGKLVKYMMG (95 aa)). The helical transmembrane segment at 2047–2067 (FPIIIGVVIFIFSPLLLWSLL) threads the bilayer. At 2068 to 2346 (NQIGTISMPE…VGFIDRAFPS (279 aa)) the chain is on the cytoplasmic side. Residues 2347-2367 (FLAKVFKGGVIAVYLSVILVV) form a helical membrane-spanning segment. Residues 2368-2442 (GRGLVRGIFT…WTRMSKKKQE (75 aa)) lie on the Extracellular side of the membrane.

It belongs to the PIEZO (TC 1.A.75) family. Expressed in the pharyngeal-intestinal and spermathecal-uterine valves and in multiple reproductive tissues including the germline, somatic oviduct, and spermatheca. During reproduction, it is expressed in sheath cells, sperm, both spermathecal valves and the spermathecal bag cells.

Its subcellular location is the cell membrane. Functionally, pore-forming subunit of a mechanosensitive non-specific cation channel. Generates currents characterized by a linear current-voltage relationship. Plays a role in reproduction by positively regulating inter-tissue signaling to promote oocyte maturation, ovulation and fertilization, and sperm navigation from and to the spermatheca. May play a role in regulating cytosolic and endoplasmic reticulum calcium ion release. The sequence is that of Piezo-type mechanosensitive ion channel component 1 from Caenorhabditis elegans.